The following is a 465-amino-acid chain: Deoxyguanosinetriphosphate triphosphohydrolase-like protein (465 aa).

Residues 1 to 22 (MKWDKLLNDKRRRESGVTRSKN) are disordered. Residues 63 to 252 (RLTHSMEVST…LEVADDIAYL (190 aa)) form the HD domain.

The protein belongs to the dGTPase family. Type 3 subfamily.

The chain is Deoxyguanosinetriphosphate triphosphohydrolase-like protein from Listeria innocua serovar 6a (strain ATCC BAA-680 / CLIP 11262).